The primary structure comprises 31 residues: Photosystem II reaction center protein T (31 aa).

The chain crosses the membrane as a helical span at residues 3–23 (SVAYILVLTMALSVIFFAIAF).

The protein belongs to the PsbT family. In terms of assembly, PSII is composed of 1 copy each of membrane proteins PsbA, PsbB, PsbC, PsbD, PsbE, PsbF, PsbH, PsbI, PsbJ, PsbK, PsbL, PsbM, PsbT, PsbX, PsbY, PsbZ, Psb30/Ycf12, peripheral proteins PsbO, CyanoQ (PsbQ), PsbU, PsbV and a large number of cofactors. It forms dimeric complexes.

The protein localises to the cellular thylakoid membrane. Found at the monomer-monomer interface of the photosystem II (PS II) dimer, plays a role in assembly and dimerization of PSII. PSII is a light-driven water plastoquinone oxidoreductase, using light energy to abstract electrons from H(2)O, generating a proton gradient subsequently used for ATP formation. The sequence is that of Photosystem II reaction center protein T from Microcystis aeruginosa (strain NIES-843 / IAM M-2473).